A 392-amino-acid chain; its full sequence is Extracellular metalloproteinase 4 (392 aa).

Positions 1-9 (VHSVVDYVS) are excised as a propeptide. An N-linked (GlcNAc...) asparagine glycan is attached at asparagine 176. Histidine 193 provides a ligand contact to Zn(2+). The active site involves glutamate 194. Histidine 197 is a binding site for Zn(2+). N-linked (GlcNAc...) asparagine glycosylation is found at asparagine 359 and asparagine 385.

This sequence belongs to the peptidase M36 family. Zn(2+) is required as a cofactor.

The protein localises to the secreted. Secreted metalloproteinase probably acting as a virulence factor. This is Extracellular metalloproteinase 4 (MEP4) from Trichophyton soudanense.